We begin with the raw amino-acid sequence, 152 residues long: Siroheme decarboxylase NirD subunit (152 aa).

Belongs to the Ahb/Nir family. Probably forms a complex composed of NirD, NirL, NirG and NirH. All proteins are required for the total conversion of siroheme to didecarboxysiroheme.

It catalyses the reaction siroheme + 2 H(+) = 12,18-didecarboxysiroheme + 2 CO2. The protein operates within porphyrin-containing compound metabolism. Involved in heme d1 biosynthesis. Catalyzes the decarboxylation of siroheme into didecarboxysiroheme. In Stutzerimonas stutzeri (Pseudomonas stutzeri), this protein is Siroheme decarboxylase NirD subunit.